Here is a 100-residue protein sequence, read N- to C-terminus: Large ribosomal subunit protein eL30 (100 aa).

It belongs to the eukaryotic ribosomal protein eL30 family.

The polypeptide is Large ribosomal subunit protein eL30 (Thermococcus sibiricus (strain DSM 12597 / MM 739)).